The primary structure comprises 231 residues: Lipoprotein-releasing system ATP-binding protein LolD (231 aa).

In terms of domain architecture, ABC transporter spans 6 to 231 (LQVQAVSKSY…YLQAVAEHAQ (226 aa)). Position 42–49 (42–49 (GTSGSGKS)) interacts with ATP.

This sequence belongs to the ABC transporter superfamily. Lipoprotein translocase (TC 3.A.1.125) family. In terms of assembly, the complex is composed of two ATP-binding proteins (LolD) and two transmembrane proteins (LolC and LolE).

It is found in the cell inner membrane. Functionally, part of the ABC transporter complex LolCDE involved in the translocation of mature outer membrane-directed lipoproteins, from the inner membrane to the periplasmic chaperone, LolA. Responsible for the formation of the LolA-lipoprotein complex in an ATP-dependent manner. The protein is Lipoprotein-releasing system ATP-binding protein LolD of Shewanella sp. (strain MR-7).